The sequence spans 197 residues: Ribonuclease HII (197 aa).

Residues 9 to 197 form the RNase H type-2 domain; the sequence is KLIAGVDEVG…APVKKALEQF (189 aa). A divalent metal cation contacts are provided by Asp-15, Glu-16, and Asp-107.

The protein belongs to the RNase HII family. The cofactor is Mn(2+). Mg(2+) is required as a cofactor.

It is found in the cytoplasm. It carries out the reaction Endonucleolytic cleavage to 5'-phosphomonoester.. Functionally, endonuclease that specifically degrades the RNA of RNA-DNA hybrids. The sequence is that of Ribonuclease HII from Haemophilus influenzae (strain PittEE).